The chain runs to 246 residues: 1-(5-phosphoribosyl)-5-[(5-phosphoribosylamino)methylideneamino] imidazole-4-carboxamide isomerase (246 aa).

The active-site Proton acceptor is the aspartate 8. The active-site Proton donor is aspartate 129.

It belongs to the HisA/HisF family.

It localises to the cytoplasm. It carries out the reaction 1-(5-phospho-beta-D-ribosyl)-5-[(5-phospho-beta-D-ribosylamino)methylideneamino]imidazole-4-carboxamide = 5-[(5-phospho-1-deoxy-D-ribulos-1-ylimino)methylamino]-1-(5-phospho-beta-D-ribosyl)imidazole-4-carboxamide. The protein operates within amino-acid biosynthesis; L-histidine biosynthesis; L-histidine from 5-phospho-alpha-D-ribose 1-diphosphate: step 4/9. The chain is 1-(5-phosphoribosyl)-5-[(5-phosphoribosylamino)methylideneamino] imidazole-4-carboxamide isomerase from Methylocella silvestris (strain DSM 15510 / CIP 108128 / LMG 27833 / NCIMB 13906 / BL2).